Reading from the N-terminus, the 507-residue chain is ATP synthase subunit alpha, chloroplastic (507 aa).

Position 170–177 (170–177 (GDRQTGKT)) interacts with ATP.

Belongs to the ATPase alpha/beta chains family. F-type ATPases have 2 components, CF(1) - the catalytic core - and CF(0) - the membrane proton channel. CF(1) has five subunits: alpha(3), beta(3), gamma(1), delta(1), epsilon(1). CF(0) has four main subunits: a, b, b' and c.

The protein localises to the plastid. It is found in the chloroplast thylakoid membrane. It catalyses the reaction ATP + H2O + 4 H(+)(in) = ADP + phosphate + 5 H(+)(out). Produces ATP from ADP in the presence of a proton gradient across the membrane. The alpha chain is a regulatory subunit. The chain is ATP synthase subunit alpha, chloroplastic from Manihot esculenta (Cassava).